Reading from the N-terminus, the 44-residue chain is Photosystem I reaction center subunit IX (44 aa).

The chain crosses the membrane as a helical span at residues 9 to 29; sequence FMRSAPIVAAIWISLTAGIII.

Belongs to the PsaJ family.

It is found in the cellular thylakoid membrane. In terms of biological role, may help in the organization of the PsaE and PsaF subunits. This Prochlorococcus marinus (strain MIT 9515) protein is Photosystem I reaction center subunit IX.